Here is a 270-residue protein sequence, read N- to C-terminus: 3-phenylpropionate-dihydrodiol/cinnamic acid-dihydrodiol dehydrogenase (270 aa).

10 to 34 serves as a coordination point for NAD(+); the sequence is FITGGGSGLGLALVERFIEEGAQVA. Position 143 (serine 143) interacts with substrate. The active-site Proton acceptor is the tyrosine 156.

The protein belongs to the short-chain dehydrogenases/reductases (SDR) family.

The catalysed reaction is 3-(cis-5,6-dihydroxycyclohexa-1,3-dien-1-yl)propanoate + NAD(+) = 3-(2,3-dihydroxyphenyl)propanoate + NADH + H(+). It catalyses the reaction (2E)-3-(cis-5,6-dihydroxycyclohexa-1,3-dien-1-yl)prop-2-enoate + NAD(+) = (2E)-3-(2,3-dihydroxyphenyl)prop-2-enoate + NADH + H(+). The protein operates within aromatic compound metabolism; 3-phenylpropanoate degradation. Functionally, converts 3-phenylpropionate-dihydrodiol (PP-dihydrodiol) and cinnamic acid-dihydrodiol (CI-dihydrodiol) into 3-(2,3-dihydroxylphenyl)propanoic acid (DHPP) and 2,3-dihydroxicinnamic acid (DHCI), respectively. The protein is 3-phenylpropionate-dihydrodiol/cinnamic acid-dihydrodiol dehydrogenase of Escherichia coli O17:K52:H18 (strain UMN026 / ExPEC).